The chain runs to 72 residues: Translation initiation factor IF-1 (72 aa).

An S1-like domain is found at 1–72; that stretch reads MAREDHIEME…SKGRIVYRAR (72 aa).

Belongs to the IF-1 family. As to quaternary structure, component of the 30S ribosomal translation pre-initiation complex which assembles on the 30S ribosome in the order IF-2 and IF-3, IF-1 and N-formylmethionyl-tRNA(fMet); mRNA recruitment can occur at any time during PIC assembly.

It localises to the cytoplasm. One of the essential components for the initiation of protein synthesis. Stabilizes the binding of IF-2 and IF-3 on the 30S subunit to which N-formylmethionyl-tRNA(fMet) subsequently binds. Helps modulate mRNA selection, yielding the 30S pre-initiation complex (PIC). Upon addition of the 50S ribosomal subunit IF-1, IF-2 and IF-3 are released leaving the mature 70S translation initiation complex. This is Translation initiation factor IF-1 from Chromohalobacter salexigens (strain ATCC BAA-138 / DSM 3043 / CIP 106854 / NCIMB 13768 / 1H11).